The primary structure comprises 155 residues: Small ribosomal subunit protein uS7cz/uS7cy (155 aa).

The protein belongs to the universal ribosomal protein uS7 family. As to quaternary structure, part of the 30S ribosomal subunit.

The protein resides in the plastid. It localises to the chloroplast. Its function is as follows. One of the primary rRNA binding proteins, it binds directly to 16S rRNA where it nucleates assembly of the head domain of the 30S subunit. The sequence is that of Small ribosomal subunit protein uS7cz/uS7cy (rps7-A) from Psilotum nudum (Whisk fern).